The chain runs to 396 residues: Tryptophan synthase beta chain (396 aa).

An N6-(pyridoxal phosphate)lysine modification is found at Lys-88.

Belongs to the TrpB family. As to quaternary structure, tetramer of two alpha and two beta chains. It depends on pyridoxal 5'-phosphate as a cofactor.

The catalysed reaction is (1S,2R)-1-C-(indol-3-yl)glycerol 3-phosphate + L-serine = D-glyceraldehyde 3-phosphate + L-tryptophan + H2O. Its pathway is amino-acid biosynthesis; L-tryptophan biosynthesis; L-tryptophan from chorismate: step 5/5. Its function is as follows. The beta subunit is responsible for the synthesis of L-tryptophan from indole and L-serine. The chain is Tryptophan synthase beta chain from Shewanella baltica (strain OS185).